The chain runs to 226 residues: Methylamine utilization ferredoxin-type protein MauM (226 aa).

4 consecutive 4Fe-4S ferredoxin-type domains span residues 59 to 87 (PEPEFNAACIRCGLCVEACPLDILHLASW), 95 to 127 (TPYFVGRTDPCRMCPDIPCARACPTGALSPLLT), 136 to 172 (VAVLVGHETCLNYKGLTCSICVRVCPIIGEAISLKQI), and 180 to 211 (QIPTVDSSKCTGCGTCEKHCVLSEAAIRLLPR). [4Fe-4S] cluster is bound by residues C67, C70, C73, C77, C105, C108, C113, C117, C145, C153, C156, C160, C189, C192, C195, and C199.

It functions in the pathway one-carbon metabolism; methylamine degradation. Its function is as follows. Involved in electron transfer. The chain is Methylamine utilization ferredoxin-type protein MauM (mauM) from Methylophilus methylotrophus (Bacterium W3A1).